The chain runs to 389 residues: Mannuronan synthase (389 aa).

The 101-residue stretch at 16 to 116 (QRQFARVKLP…EVAALRYLIT (101 aa)) folds into the PilZ domain.

The protein belongs to the Alg44 family.

Its subcellular location is the periplasm. It catalyses the reaction [(1-&gt;4)-beta-D-mannuronosyl](n) + GDP-alpha-D-mannuronate = [(1-&gt;4)-beta-D-mannuronosyl](n+1) + GDP + H(+). The protein operates within glycan biosynthesis; alginate biosynthesis. In terms of biological role, required for alginate biosynthesis. This is Mannuronan synthase (alg44) from Pseudomonas aeruginosa (strain ATCC 15692 / DSM 22644 / CIP 104116 / JCM 14847 / LMG 12228 / 1C / PRS 101 / PAO1).